Reading from the N-terminus, the 227-residue chain is Orotate phosphoribosyltransferase (227 aa).

Lys26 contributes to the 5-phospho-alpha-D-ribose 1-diphosphate binding site. 34–35 (FF) provides a ligand contact to orotate. Residues 72–73 (YK), Arg98, Lys99, Lys102, His104, and 123–131 (DDVVSAGLS) contribute to the 5-phospho-alpha-D-ribose 1-diphosphate site. Orotate is bound by residues Ser127 and Arg155.

This sequence belongs to the purine/pyrimidine phosphoribosyltransferase family. PyrE subfamily. Homodimer. Mg(2+) serves as cofactor.

The catalysed reaction is orotidine 5'-phosphate + diphosphate = orotate + 5-phospho-alpha-D-ribose 1-diphosphate. The protein operates within pyrimidine metabolism; UMP biosynthesis via de novo pathway; UMP from orotate: step 1/2. Catalyzes the transfer of a ribosyl phosphate group from 5-phosphoribose 1-diphosphate to orotate, leading to the formation of orotidine monophosphate (OMP). This chain is Orotate phosphoribosyltransferase, found in Nitrosomonas europaea (strain ATCC 19718 / CIP 103999 / KCTC 2705 / NBRC 14298).